A 328-amino-acid polypeptide reads, in one-letter code: MPVKPNQPRPSTKQDPSSGASRQRFGYVTGWLHRIRSVPAIAHFIRAGDRFNDRMGNQFGAAITYFSFLSLIPILMVSFATAGFVLASNPDLLTGLINRIVNSISDPSLARTLKNTVNTAVRQRTTVGLTGLLIALYSGVNWIGNLREAIHAQSRDVWERQPHEEEKIYLRYLWDFLSLIGLLLALVITLFLTSVAGSAQATIVRALGLNGIDWLRPVMTLIALSISIFANYLLFLWILWVLPRHNPRRGPLLRGTLMAAIGFEALKFAMTVALPELATSPSGAAFGSVIGLMTFFYFFARLTLFCAAWIATADPKTDINTQAPLPGA.

The disordered stretch occupies residues 1–22; it reads MPVKPNQPRPSTKQDPSSGASR. The span at 9 to 21 shows a compositional bias: polar residues; the sequence is RPSTKQDPSSGAS. The next 6 helical transmembrane spans lie at 66–86, 126–146, 176–196, 221–241, 255–275, and 290–310; these read FSFLSLIPILMVSFATAGFVL, TVGLTGLLIALYSGVNWIGNL, FLSLIGLLLALVITLFLTSVA, LIALSISIFANYLLFLWILWV, GTLMAAIGFEALKFAMTVALP, and IGLMTFFYFFARLTLFCAAWI.

It to E.coli YhjD.

The protein localises to the cell inner membrane. This is an uncharacterized protein from Dickeya dadantii (strain 3937) (Erwinia chrysanthemi (strain 3937)).